The sequence spans 177 residues: Basic form of pathogenesis-related protein 1 (177 aa).

The N-terminal stretch at methionine 1 to alanine 23 is a signal peptide. Pyrrolidone carboxylic acid is present on glutamine 24. In terms of domain architecture, SCP spans leucine 31–tyrosine 147.

Belongs to the CRISP family. In terms of processing, two disulfide bonds are present.

In terms of biological role, probably involved in the defense reaction of plants against pathogens. The chain is Basic form of pathogenesis-related protein 1 from Nicotiana tabacum (Common tobacco).